Reading from the N-terminus, the 441-residue chain is Pre-mRNA-splicing factor PRP46 (441 aa).

Disordered stretches follow at residues 1-22 (MPVA…NEPS) and 81-107 (MGAS…LTNL). Residues 83–107 (ASSSALTKHTPSASQPTTHDSLTNL) show a composition bias toward polar residues. WD repeat units lie at residues 130-169 (GHQG…LRLT), 172-211 (GHIM…VVRH), 214-253 (GHLS…PVVV), 256-295 (GHKS…TMTT), 298-336 (HHKK…LVLN), 339-379 (DQNA…QSTQ), and 388-427 (ESEN…TAES).

Belongs to the WD repeat PRL1/PRL2 family. Associated with the spliceosome.

The protein resides in the cytoplasm. The protein localises to the nucleus. Involved in pre-mRNA splicing and required for cell cycle progression at G2/M. The sequence is that of Pre-mRNA-splicing factor PRP46 (PRP46) from Yarrowia lipolytica (strain CLIB 122 / E 150) (Yeast).